Here is a 113-residue protein sequence, read N- to C-terminus: Large ribosomal subunit protein P1 (113 aa).

Residues 56–66 show a composition bias toward low complexity; the sequence is TAAAAPAPAAG. The disordered stretch occupies residues 56–113; the sequence is TAAAAPAPAAGGSAGGEVEAADDDDEEDAEEEAADEGGDDDGDDDEEADGEGLGALFG. The span at 74–105 shows a compositional bias: acidic residues; that stretch reads EAADDDDEEDAEEEAADEGGDDDGDDDEEADG.

It belongs to the eukaryotic ribosomal protein P1/P2 family. In terms of assembly, part of the 50S ribosomal subunit. Homodimer, it forms part of the ribosomal stalk which helps the ribosome interact with GTP-bound translation factors. Forms a heptameric uL10/P0(P1)2(P1)2(P1)2 complex, where uL10/P0 forms an elongated spine to which the P1 dimers bind in a sequential fashion.

Forms part of the ribosomal stalk, playing a central role in the interaction of the ribosome with GTP-bound translation factors. In Haloferax volcanii (strain ATCC 29605 / DSM 3757 / JCM 8879 / NBRC 14742 / NCIMB 2012 / VKM B-1768 / DS2) (Halobacterium volcanii), this protein is Large ribosomal subunit protein P1.